We begin with the raw amino-acid sequence, 799 residues long: 1-phosphatidylinositol 4,5-bisphosphate phosphodiesterase delta-4 (799 aa).

The 109-residue stretch at 16–124 (LLMQEGMPMR…WMRGLHLLVD (109 aa)) folds into the PH domain. The interval 26–53 (KVRSKSWKKLRYFRLQNDGMTVWHARQA) is substrate binding. 3 consecutive EF-hand domains span residues 134 to 169 (RLDQ…MNVE), 170 to 205 (MDQE…LTKR), and 206 to 237 (AEVQ…EQKE). Ca(2+) is bound by residues Asp-147, Asn-149, Asp-151, Lys-153, Glu-158, Asp-183, Ser-185, Ser-187, Thr-189, and Glu-194. The GBA motif lies at 213–243 (ESFSADGQKLTLLEFSDFLREEQKERDCTSE). The 146-residue stretch at 290–435 (QDMTQPLNHY…LRRKILVKGK (146 aa)) folds into the PI-PLC X-box domain. Residue His-305 is part of the active site. The Ca(2+) site is built by Asn-306, Glu-335, and Asp-337. Residue His-350 is part of the active site. Glu-384 lines the Ca(2+) pocket. Residues Lys-433 and Lys-435 each coordinate substrate. Ser-460 is modified (phosphoserine). The region spanning 530–646 (LSSLVIYLKS…GYVLKPDFLR (117 aa)) is the PI-PLC Y-box domain. Substrate-binding residues include Ser-559 and Arg-586. The C2 domain maps to 646-773 (RDNQSSFHPE…QGYRHIHLLS (128 aa)). Ca(2+)-binding residues include Ile-687, Asp-689, Asn-713, Asp-742, Tyr-743, and Asp-744. The short motif at 768–771 (HIHL) is the PDZ-binding element.

In terms of assembly, interacts with GRIP1. Interacts (via GBA motif) with guanine nucleotide-binding protein G(i) alpha subunit GNAI3 (inactive GDP-bound form); low-affinity interaction. Requires Ca(2+) as cofactor.

The protein localises to the membrane. It is found in the nucleus. It localises to the cytoplasm. Its subcellular location is the endoplasmic reticulum. The catalysed reaction is a 1,2-diacyl-sn-glycero-3-phospho-(1D-myo-inositol-4,5-bisphosphate) + H2O = 1D-myo-inositol 1,4,5-trisphosphate + a 1,2-diacyl-sn-glycerol + H(+). It carries out the reaction a 1,2-diacyl-sn-glycero-3-phospho-(1D-myo-inositol) + H2O = 1D-myo-inositol 1-phosphate + a 1,2-diacyl-sn-glycerol + H(+). Functionally, hydrolyzes the phosphatidylinositol 4,5-bisphosphate (PIP2) to generate 2 second messenger molecules diacylglycerol (DAG) and inositol 1,4,5-trisphosphate (IP3). DAG mediates the activation of protein kinase C (PKC), while IP3 releases Ca(2+) from intracellular stores. Required for acrosome reaction in sperm during fertilization, probably by acting as an important enzyme for intracellular Ca(2+) mobilization in the zona pellucida-induced acrosome reaction. May play a role in cell growth. Modulates the liver regeneration in cooperation with nuclear PKC. Overexpression up-regulates the Erk signaling pathway and proliferation. This chain is 1-phosphatidylinositol 4,5-bisphosphate phosphodiesterase delta-4 (PLCD4), found in Macaca fascicularis (Crab-eating macaque).